A 114-amino-acid chain; its full sequence is MQIQNNLFFCCYTVMSAIFKWLLLYSLPALCFLLGTQESESFHSKAEILVTLSQVIISPAGPHALTWTTHFSPSVIIILVPCWWHAVIVTQHPVANCYVTNHLNIQWLELKAGS.

Helical transmembrane passes span 14 to 34 and 75 to 95; these read VMSA…CFLL and VIII…HPVA.

It localises to the membrane. This is an uncharacterized protein from Homo sapiens (Human).